The chain runs to 296 residues: 5,10-methylenetetrahydrofolate reductase (296 aa).

Glu28 acts as the Proton donor/acceptor in catalysis. Thr59 is an NADH binding site. Positions 60, 62, 88, 118, 119, 120, 132, 152, 156, 159, 165, 168, 171, and 172 each coordinate FAD. Asp120 serves as a coordination point for (6S)-5-methyl-5,6,7,8-tetrahydrofolate. Residue Gln183 coordinates NADH. (6S)-5-methyl-5,6,7,8-tetrahydrofolate is bound by residues Gln183, Gln219, and Arg279.

It belongs to the methylenetetrahydrofolate reductase family. Requires FAD as cofactor.

The enzyme catalyses (6S)-5-methyl-5,6,7,8-tetrahydrofolate + NAD(+) = (6R)-5,10-methylene-5,6,7,8-tetrahydrofolate + NADH + H(+). The protein operates within one-carbon metabolism; tetrahydrofolate interconversion. It functions in the pathway amino-acid biosynthesis; L-methionine biosynthesis via de novo pathway. In terms of biological role, catalyzes the NADH-dependent reduction of 5,10-methylenetetrahydrofolate to 5-methyltetrahydrofolate. Is required to provide the methyl group necessary for methionine synthetase to convert homocysteine to methionine; the methyl group is given by 5-methyltetrahydrofolate. The protein is 5,10-methylenetetrahydrofolate reductase (metF) of Salmonella typhimurium (strain LT2 / SGSC1412 / ATCC 700720).